A 213-amino-acid chain; its full sequence is Pyridoxine/pyridoxamine 5'-phosphate oxidase (213 aa).

Residues 8 to 11 (RREY) and Lys67 each bind substrate. FMN-binding positions include 62 to 67 (RIVLLK), 77 to 78 (FT), Arg83, Lys84, and Gln106. 3 residues coordinate substrate: Tyr124, Arg128, and Ser132. Residues 141-142 (QS) and Trp186 each bind FMN. A substrate-binding site is contributed by 192 to 194 (RLH). FMN is bound at residue Arg196.

The protein belongs to the pyridoxamine 5'-phosphate oxidase family. Homodimer. It depends on FMN as a cofactor.

The catalysed reaction is pyridoxamine 5'-phosphate + O2 + H2O = pyridoxal 5'-phosphate + H2O2 + NH4(+). It carries out the reaction pyridoxine 5'-phosphate + O2 = pyridoxal 5'-phosphate + H2O2. Its pathway is cofactor metabolism; pyridoxal 5'-phosphate salvage; pyridoxal 5'-phosphate from pyridoxamine 5'-phosphate: step 1/1. The protein operates within cofactor metabolism; pyridoxal 5'-phosphate salvage; pyridoxal 5'-phosphate from pyridoxine 5'-phosphate: step 1/1. In terms of biological role, catalyzes the oxidation of either pyridoxine 5'-phosphate (PNP) or pyridoxamine 5'-phosphate (PMP) into pyridoxal 5'-phosphate (PLP). This chain is Pyridoxine/pyridoxamine 5'-phosphate oxidase, found in Shewanella woodyi (strain ATCC 51908 / MS32).